We begin with the raw amino-acid sequence, 118 residues long: Small ribosomal subunit protein uS12cz/uS12cy (118 aa).

Belongs to the universal ribosomal protein uS12 family. As to quaternary structure, part of the 30S ribosomal subunit.

Its subcellular location is the plastid. It is found in the chloroplast. In terms of biological role, with S4 and S5 plays an important role in translational accuracy. Located at the interface of the 30S and 50S subunits. This chain is Small ribosomal subunit protein uS12cz/uS12cy (rps12-A), found in Helianthus annuus (Common sunflower).